Reading from the N-terminus, the 620-residue chain is Probable potassium transport system protein Kup 2 (620 aa).

Transmembrane regions (helical) follow at residues 10 to 30, 50 to 70, 102 to 122, 136 to 156, 168 to 188, 211 to 231, 246 to 266, 284 to 304, 336 to 356, 368 to 388, 393 to 413, and 415 to 435; these read LLVSAVGVVFGDIGTSPLYAL, VLSLVFWTVMLLVTVKYVIVI, MMLGVIAAALFYGDSMITPAI, PDLRPYVVPITAVVLTALFAI, FGPVMCLWFITLAVLGIVNVI, LMSFYALGSVVLAVTGGEALY, WFCLVLPALLLNYFGQGALLI, MVVPLVALATFAAVIASQAVI, IYVPFTNWTLYLAVMALVVGF, IAVTSTMMIDTILVSFVMALL, MALVITVVGTLLAVDIAFFSA, and IIKVAQGGWFPLFIGFISFTV.

It belongs to the HAK/KUP transporter (TC 2.A.72) family.

The protein localises to the cell inner membrane. It carries out the reaction K(+)(in) + H(+)(in) = K(+)(out) + H(+)(out). In terms of biological role, transport of potassium into the cell. Likely operates as a K(+):H(+) symporter. The chain is Probable potassium transport system protein Kup 2 from Rhodopseudomonas palustris (strain BisB5).